We begin with the raw amino-acid sequence, 338 residues long: Heat-inducible transcription repressor HrcA (338 aa).

This sequence belongs to the HrcA family.

Functionally, negative regulator of class I heat shock genes (grpE-dnaK-dnaJ and groELS operons). Prevents heat-shock induction of these operons. The protein is Heat-inducible transcription repressor HrcA of Bacillus cereus (strain B4264).